A 688-amino-acid chain; its full sequence is Glycine--tRNA ligase beta subunit (688 aa).

It belongs to the class-II aminoacyl-tRNA synthetase family. Tetramer of two alpha and two beta subunits.

It localises to the cytoplasm. The catalysed reaction is tRNA(Gly) + glycine + ATP = glycyl-tRNA(Gly) + AMP + diphosphate. This chain is Glycine--tRNA ligase beta subunit, found in Clostridioides difficile (strain 630) (Peptoclostridium difficile).